The following is a 364-amino-acid chain: DNA polymerase IV (364 aa).

Residues 14–198 form the UmuC domain; the sequence is IIHIDMDAFF…LPIEKFHGVG (185 aa). Mg(2+) contacts are provided by Asp18 and Asp116. Glu117 is an active-site residue.

This sequence belongs to the DNA polymerase type-Y family. As to quaternary structure, monomer. Mg(2+) is required as a cofactor.

Its subcellular location is the cytoplasm. The enzyme catalyses DNA(n) + a 2'-deoxyribonucleoside 5'-triphosphate = DNA(n+1) + diphosphate. Poorly processive, error-prone DNA polymerase involved in untargeted mutagenesis. Copies undamaged DNA at stalled replication forks, which arise in vivo from mismatched or misaligned primer ends. These misaligned primers can be extended by PolIV. Exhibits no 3'-5' exonuclease (proofreading) activity. May be involved in translesional synthesis, in conjunction with the beta clamp from PolIII. This chain is DNA polymerase IV, found in Streptococcus pyogenes serotype M18 (strain MGAS8232).